The following is a 97-amino-acid chain: Co-chaperonin GroES (97 aa).

The protein belongs to the GroES chaperonin family. In terms of assembly, heptamer of 7 subunits arranged in a ring. Interacts with the chaperonin GroEL.

It localises to the cytoplasm. Its function is as follows. Together with the chaperonin GroEL, plays an essential role in assisting protein folding. The GroEL-GroES system forms a nano-cage that allows encapsulation of the non-native substrate proteins and provides a physical environment optimized to promote and accelerate protein folding. GroES binds to the apical surface of the GroEL ring, thereby capping the opening of the GroEL channel. The polypeptide is Co-chaperonin GroES (Pseudomonas putida (Arthrobacter siderocapsulatus)).